Consider the following 436-residue polypeptide: MSDRQQVTNAKGERIAIVAGLRTPFAKQATAFHGVSALDMGKMVVNELLVRSELDPKLIEQLVYGQVVQMPAAPNIAREIVLGTGMNVSTDAYSVTRACATSFQSTVNVAESIMTGNIDIGIAGGADSSSVLPIGVSKKLAHALVDLNKARSFGQKLQIFRRLGLKDLLPVPPAVAEYSTGLSMGQTAEQMAKTYNISRADQDALAHRSHTLASETWASGHLRDEVMVAHIPPYKQFIDRDNNIRENSVLESYAKLRPAFDKQHGTVTAANSTPLTDGASAIILMSEGRAKALGYQPIGYIKSYAFSAINVWQDMLMGPSYATPLALKRAGMELEDLTLIEMHEAFAAQTLANMQMFASKKFAEEKLGRNRAIGEIDMSKFNVLGGSLAYGHPFAATGTRLITQVCRELKRRGGGTGLTTACAAGGLGVAMIVEVE.

Cysteine 99 (acyl-thioester intermediate) is an active-site residue. Catalysis depends on proton acceptor residues histidine 392 and cysteine 422.

This sequence belongs to the thiolase-like superfamily. Thiolase family. Heterotetramer of two alpha chains (FadJ) and two beta chains (FadI).

Its subcellular location is the cytoplasm. It catalyses the reaction an acyl-CoA + acetyl-CoA = a 3-oxoacyl-CoA + CoA. The protein operates within lipid metabolism; fatty acid beta-oxidation. Functionally, catalyzes the final step of fatty acid oxidation in which acetyl-CoA is released and the CoA ester of a fatty acid two carbons shorter is formed. The protein is 3-ketoacyl-CoA thiolase of Shewanella putrefaciens (strain CN-32 / ATCC BAA-453).